The primary structure comprises 669 residues: Potassium voltage-gated channel subfamily KQT member 1 (669 aa).

At 1 to 120 (MDTASSPPNA…YNFLERPTGW (120 aa)) the chain is on the cytoplasmic side. The residue at position 27 (Ser27) is a Phosphoserine; by PKA. Residues 121 to 142 (KCFVYHFTVFLIVLVCLIFSVL) traverse the membrane as a helical segment. At 143–153 (STIEQYAALAT) the chain is on the extracellular side. The helical transmembrane segment at 154-176 (GTLFWMEIVLVVFFGTEYVVRLW) threads the bilayer. Residues 177 to 192 (SAGCRSKYVGIWGRLR) lie on the Cytoplasmic side of the membrane. Residues 193–218 (FARKPISIIDLIVVVASMVVLCVGSK) form a helical membrane-spanning segment. At 219 to 226 (GQVFATSA) the chain is on the extracellular side. Residues 227–242 (IRGIRFLQILRMLHVD) form a helical; Voltage-sensor membrane-spanning segment. The segment at 238–246 (MLHVDRQGG) is interaction with KCNE3. Over 243 to 260 (RQGGTWRLLGSVVFIHRQ) the chain is Cytoplasmic. Gln244 contacts a 1,2-diacyl-sn-glycero-3-phospho-(1D-myo-inositol-4,5-bisphosphate). A helical transmembrane segment spans residues 261–283 (ELITTLYIGFLGLIFSSYFVYLA). Residues 284 to 299 (EKDAVNESGRIEFGSY) are Extracellular-facing. Asn289 is a glycosylation site (N-linked (GlcNAc...) asparagine). Residues 300–320 (ADALWWGVVTVTTIGYGDKVP) constitute an intramembrane region (pore-forming). At 321–322 (QT) the chain is on the extracellular side. Residues 323 to 348 (WVGKTIASCFSVFAISFFALPAGILG) traverse the membrane as a helical segment. Topologically, residues 349 to 669 (SGFALKVQQK…VPQTGPDEGS (321 aa)) are cytoplasmic. Residues 370–382 (AAASLIQTAWRCY) form an interaction with CALM region. Phosphoserine occurs at positions 407 and 409. The segment at 515-529 (KVIRRMQYFVAKKKF) is interaction with CALM; calcium-dependent. Residues 535–572 (PYDVRDVIEQYSQGHLNLMVRIKELQRRLDQSIGKPSL) are interaction with KCNE1 C-terminus. Residues 585–621 (SNTIGARLNRVEDKVTQLDQRLVIITDMLHQLLSLQQ) adopt a coiled-coil conformation. The tract at residues 588–616 (IGARLNRVEDKVTQLDQRLVIITDMLHQL) is interaction with AKAP9. Residues 589-620 (GARLNRVEDKVTQLDQRLVIITDMLHQLLSLQ) are C-terminal assembly domain (tetramerization).

Belongs to the potassium channel family. KQT (TC 1.A.1.15) subfamily. Kv7.1/KCNQ1 sub-subfamily. Tetramer. Heterotetramer with KCNE1; targets to the membrane raft. Interacts (via C-terminus) with CALM; forms a heterooctameric structure (with 4:4 KCNQ1:CALM stoichiometry) in a calcium-independent manner. Interacts with AKAP9; targets protein kinase A (PKA) catalytic and regulatory subunits and protein phosphatase 1 (PP1) to the KCNQ1-KCNE1 complex, allowing PKA-mediated phosphorylation and increase of delayed rectifier potassium channel activity. Interacts with KCNE2; form a heterooligomer complex that targets to the membrane raft and leading to currents with an apparently instantaneous activation, a rapid deactivation process and a linear current-voltage relationship and decreases the amplitude of the outward current. Interacts with AP2M1; mediates estrogen-induced internalization via clathrin-coated vesicles. Interacts with NEDD4L; promotes internalization and decreases I(Ks) currents. Interacts with USP2; counteracts the NEDD4L-specific down-regulation of I(Ks) and restore plasma membrane localization. Heterotetramer with KCNQ5; has a voltage-gated potassium channel activity. Interacts with KCNE3; produces a current with nearly instantaneous activation with a linear current-voltage relationship and alters membrane raft localization. Interacts with KCNE4; impairs KCNQ1 localization in lipid rafts and inhibits voltage-gated potassium channel activity. Interacts with KCNE5; impairs KCNQ1 localization in lipid rafts and only conducts current upon strong and continued depolarization. Interacts with SLC5A3; forms coregulatory channel-transporter complexes that modulate Na(+)-coupled myo-inositol influx through the transporter. Phosphorylation at Ser-27 by PKA; increases delayed rectifier potassium channel activity of the KCNQ1-KCNE1 complex through a macromolecular complex that includes PKA, PP1, and the targeting protein AKAP9. Post-translationally, ubiquitinated by NEDD4L; promotes internalization. The ubiquitinylated form is internalized through a clathrin-mediated endocytosis by interacting with AP2M1 and is recycled back to the cell membrane via RAB4A and RAB11A. In terms of processing, deubiquitinated by USP2; counteracts the NEDD4L-specific down-regulation of I(Ks) and restores the membrane localization.

It localises to the cell membrane. The protein localises to the cytoplasmic vesicle membrane. It is found in the early endosome. Its subcellular location is the membrane raft. The protein resides in the endoplasmic reticulum. It localises to the basolateral cell membrane. The protein localises to the apical cell membrane. It carries out the reaction K(+)(in) = K(+)(out). Its activity is regulated as follows. PIP2 molecule is essential to activate KCNQ channels by inducing the coupling of the voltage-sensing domain (VSD) and the pore-forming domain (PD). Upon channel activation, PIP2 disrupts the VSD-calmodulin/CALM interactions, causing the release of CALM from the VSD which triggers the opening of the gate. Calcium potentiates KCNQ1 channel current through calcium-bound CALM. Calcium-bound CALM competes with PIP2 to stabilize the channel open state. Functionally, pore-forming subunit of the voltage-gated potassium (Kv) channel involved in the regulation of cardiomyocyte excitability and important in normal development and functions of myocardium, inner ear, stomach and colon. Associates with KCNE beta subunits that modulates current kinetics. Induces a voltage-dependent by rapidly activating and slowly deactivating potassium-selective outward current. Also promotes a delayed voltage activated potassium current showing outward rectification characteristic. During beta-adrenergic receptor stimulation participates in cardiac repolarization by associating with KCNE1 to form the I(Ks) cardiac potassium current that increases the amplitude and slows down the activation kinetics of outward potassium current I(Ks). Muscarinic agonist oxotremorine-M strongly suppresses KCNQ1/KCNE1 current. When associated with KCNE3, forms the potassium channel that is important for cyclic AMP-stimulated intestinal secretion of chloride ions. This interaction with KCNE3 is reduced by 17beta-estradiol, resulting in the reduction of currents. During conditions of increased substrate load, maintains the driving force for proximal tubular and intestinal sodium ions absorption, gastric acid secretion, and cAMP-induced jejunal chloride ions secretion. Allows the provision of potassium ions to the luminal membrane of the secretory canaliculus in the resting state as well as during stimulated acid secretion. When associated with KCNE2, forms a heterooligomer complex leading to currents with an apparently instantaneous activation, a rapid deactivation process and a linear current-voltage relationship and decreases the amplitude of the outward current. When associated with KCNE4, inhibits voltage-gated potassium channel activity. When associated with KCNE5, this complex only conducts current upon strong and continued depolarization. Also forms a heterotetramer with KCNQ5 that has a voltage-gated potassium channel activity. Binds with phosphatidylinositol 4,5-bisphosphate. KCNQ1-KCNE2 channel associates with Na(+)-coupled myo-inositol symporter in the apical membrane of choroid plexus epithelium and regulates the myo-inositol gradient between blood and cerebrospinal fluid with an impact on neuron excitability. The protein is Potassium voltage-gated channel subfamily KQT member 1 of Rattus norvegicus (Rat).